Here is a 369-residue protein sequence, read N- to C-terminus: Peptide chain release factor 2 (369 aa).

An N5-methylglutamine modification is found at Gln247.

Belongs to the prokaryotic/mitochondrial release factor family. Methylated by PrmC. Methylation increases the termination efficiency of RF2.

It localises to the cytoplasm. Peptide chain release factor 2 directs the termination of translation in response to the peptide chain termination codons UGA and UAA. The protein is Peptide chain release factor 2 of Phenylobacterium zucineum (strain HLK1).